Here is a 114-residue protein sequence, read N- to C-terminus: Cytochrome c oxidase subunit 7A2-like, mitochondrial (114 aa).

The N-terminal 55 residues, 1–55, are a transit peptide targeting the mitochondrion; sequence MYYKFSGFTQKLAGAWASEAYSPQGLKPVVSTEAPPIIFATPTKLTSDSTVYDYA. At K69 the chain carries N6-acetyllysine. The helical transmembrane segment at 82-107 threads the bilayer; sequence PDQMLYRTTMALTVGGTIYCLIALYM.

It belongs to the cytochrome c oxidase VIIa family. As to quaternary structure, interacts with the mitochondrial respiratory complexes III (CIII) and IV (CIV), promoting their association.

The protein resides in the mitochondrion inner membrane. Assembly factor that mediates the formation of some mitochondrial respiratory supercomplexes (respirasomes), thereby promoting oxidative phosphorylation and energy metabolism. Acts as a molecular adapter that associates with both mitochondrial respiratory complexes III (CIII) and IV (CIV), promoting their association. Mediates the formation of various mitochondrial respiratory supercomplexes, such as MCIII(2)IV(2), composed of two CIII and two CIV, and the CS-respirasome (MCI(1)III(2)IV(2)), composed of one CI, two CIII and two CIV. Not involved in the formation of the canonical respirasome (MCI(1)III(2)IV(1)), composed of one CI, two CIII and one CIV. The formation of different respirasomes is important for cell adaptation to oxygen conditions and prevent metabolic exhaustion: supercomplexes mediated by COX7A2L/SCAF1 are required to maintain oxidative phosphorylation upon low oxygen conditions and promote metabolic rewiring toward glycolysis. The polypeptide is Cytochrome c oxidase subunit 7A2-like, mitochondrial (Homo sapiens (Human)).